A 437-amino-acid chain; its full sequence is Sodium/bile acid cotransporter 4 (437 aa).

Topologically, residues 1-103 are extracellular; the sequence is MDSLDNTTLL…PPFWDTPLNH (103 aa). N-linked (GlcNAc...) asparagine glycosylation is found at Asn-6 and Asn-20. Residues 15–79 form a disordered region; sequence SLLPDNLTLS…SSSLTVGVAG (65 aa). The span at 22-41 shows a compositional bias: polar residues; it reads TLSPNAGSPSASTLSPLAVT. The segment covering 42–74 has biased composition (low complexity); that stretch reads SSPGPGLSLAPSPSIGFSPEATPTPEPTSSSLT. A helical membrane pass occupies residues 104–124; it reads GLNVFVGAALCITMLGLGCTV. The Cytoplasmic segment spans residues 125-140; it reads DVNHFGAHVRRPVGAL. Residues 141–161 traverse the membrane as a helical segment; it reads LAALCQFGFLPLLAFLLALIF. Topologically, residues 162-197 are extracellular; that stretch reads KLDEVAAVAVLLCGCCPGGNLSNLMSLLVDGDMNLS. N-linked (GlcNAc...) asparagine glycosylation is found at Asn-181 and Asn-195. A helical transmembrane segment spans residues 198 to 218; sequence IIMTISSTLLALVLMPLCLWI. At 219-233 the chain is on the cytoplasmic side; sequence YSRAWINTPLVQLLP. A helical membrane pass occupies residues 234-254; that stretch reads LGAVTLTLCSTLIPIGLGVFI. Topologically, residues 255–267 are extracellular; sequence RYKYNRVADYIVK. A helical membrane pass occupies residues 268–288; that stretch reads VSLWSLLVTLVVLFIMTGTML. The Cytoplasmic segment spans residues 289 to 291; it reads GPE. The chain crosses the membrane as a helical span at residues 292–312; it reads LLASIPATVYVVAIFMPLAGY. At 313–360 the chain is on the extracellular side; that stretch reads ASGYGLATLFHLPPNCKRTVCLETGSQNVQLCTAILKLAFPPRFIGSM. The chain crosses the membrane as a helical span at residues 361 to 381; that stretch reads YMFPLLYALFQSAEAGVFVLI. At 382-437 the chain is on the cytoplasmic side; it reads YKMYGSEILHKREALDEDEDTDISYKKLKEEEMADTSYGTVGTDDLVMMETTQTAL.

The protein belongs to the bile acid:sodium symporter (BASS) (TC 2.A.28) family. In terms of processing, activated following N-terminal proteolytic cleavage by thrombin and/or proteases. In terms of tissue distribution, highest expression in the brain and significantly above background levels in the eye, prostate, and whole embryo tissue preparations.

The protein localises to the cell membrane. Transporter for bile acids. The polypeptide is Sodium/bile acid cotransporter 4 (Slc10a4) (Mus musculus (Mouse)).